A 615-amino-acid chain; its full sequence is Elongation factor 4 (615 aa).

A tr-type G domain is found at 14-200 (SRIRNFCIIA…KVVELIPAPS (187 aa)). Residues 26–31 (DHGKST) and 147–150 (NKID) contribute to the GTP site.

Belongs to the TRAFAC class translation factor GTPase superfamily. Classic translation factor GTPase family. LepA subfamily.

It is found in the cell membrane. The catalysed reaction is GTP + H2O = GDP + phosphate + H(+). Functionally, required for accurate and efficient protein synthesis under certain stress conditions. May act as a fidelity factor of the translation reaction, by catalyzing a one-codon backward translocation of tRNAs on improperly translocated ribosomes. Back-translocation proceeds from a post-translocation (POST) complex to a pre-translocation (PRE) complex, thus giving elongation factor G a second chance to translocate the tRNAs correctly. Binds to ribosomes in a GTP-dependent manner. The protein is Elongation factor 4 of Corynebacterium efficiens (strain DSM 44549 / YS-314 / AJ 12310 / JCM 11189 / NBRC 100395).